Here is a 1507-residue protein sequence, read N- to C-terminus: ABC multidrug transporter SNQ2 (1507 aa).

The interval 1–73 (MSSSSEISVA…RSSTAELSPE (73 aa)) is disordered. Residues 41–55 (RSHEDADGDDAHSDN) are compositionally biased toward basic and acidic residues. 2 N-linked (GlcNAc...) asparagine glycosylation sites follow: asparagine 55 and asparagine 336. The ABC transporter 1 domain occupies 157–412 (CLPYTIYKAI…FYRMGYECPP (256 aa)). 3 consecutive transmembrane segments (helical) span residues 522 to 542 (AYTVITICSAIIQSLVSGSLY), 556 to 576 (GGVLYFCLLYYSLMGLANLSF), and 605 to 625 (FPFRMIGMTCFLIIIYFLSGL). Residue asparagine 626 is glycosylated (N-linked (GlcNAc...) asparagine). Residues 635–655 (VYLFLTMCSESINALFELIAA) traverse the membrane as a helical segment. A glycan (N-linked (GlcNAc...) asparagine) is linked at asparagine 659. 2 helical membrane passes run 665-685 (SISGIVMMSISLYSTYMIQLP) and 773-793 (FGIMWCFLLGYIALKALITEI). The region spanning 857–1099 (FIWRNVCYTI…LLSYFERNGA (243 aa)) is the ABC transporter 2 domain. A glycan (N-linked (GlcNAc...) asparagine) is linked at asparagine 878. ATP is bound at residue 893–900 (GESGAGKT). A run of 3 helical transmembrane segments spans residues 1193-1213 (YIMSKMMLMTVGGLYIGFTFY), 1220-1240 (TGLQNTLFAAFISIILSAPAM), and 1270-1290 (LITQYLSEIPYHFLFSAIFFV). A glycan (N-linked (GlcNAc...) asparagine) is linked at asparagine 1311. 2 helical membrane-spanning segments follow: residues 1314-1334 (IMFQLYYIGFGLCVLYMAPNL) and 1339-1359 (VILGLCLSFLIAFCGVVQPVS). An N-linked (GlcNAc...) asparagine glycan is attached at asparagine 1428. A helical transmembrane segment spans residues 1459–1479 (FGLYWAYIGFNICAMVAIYYI).

Belongs to the ABC transporter superfamily. ABCG family. PDR (TC 3.A.1.205) subfamily.

The protein resides in the cell membrane. ABC multidrug transporter involved in the response to azoles such as fluconazole, itraconazole, ketoconazole and voriconazole and contributes to the development of PDR1-dependent azole resistance. Plays a role in biofilm tolerance to fluconazole. Also confers resistance to 4-nitroquinoline-N-oxide (4-NQO). The polypeptide is ABC multidrug transporter SNQ2 (Candida glabrata (strain ATCC 2001 / BCRC 20586 / JCM 3761 / NBRC 0622 / NRRL Y-65 / CBS 138) (Yeast)).